We begin with the raw amino-acid sequence, 251 residues long: GTP cyclohydrolase 1 type 2 homolog (251 aa).

A divalent metal cation contacts are provided by His64, His65, Asp102, His219, and Glu223.

The protein belongs to the GTP cyclohydrolase I type 2/NIF3 family. In terms of assembly, homohexamer.

The sequence is that of GTP cyclohydrolase 1 type 2 homolog from Chlamydia pneumoniae (Chlamydophila pneumoniae).